The sequence spans 442 residues: Proline--tRNA ligase (442 aa).

The protein belongs to the class-II aminoacyl-tRNA synthetase family. ProS type 2 subfamily. Homodimer.

The protein localises to the cytoplasm. The enzyme catalyses tRNA(Pro) + L-proline + ATP = L-prolyl-tRNA(Pro) + AMP + diphosphate. In terms of biological role, catalyzes the attachment of proline to tRNA(Pro) in a two-step reaction: proline is first activated by ATP to form Pro-AMP and then transferred to the acceptor end of tRNA(Pro). This is Proline--tRNA ligase from Rhizobium meliloti (strain 1021) (Ensifer meliloti).